Reading from the N-terminus, the 377-residue chain is Unsaturated 3S-rhamnoglycuronyl hydrolase (377 aa).

Residues 1 to 25 (MKNQALKILTLCVLVGSAMSLKLYA) form the signal peptide. The Proton donor role is filled by aspartate 161.

This sequence belongs to the glycosyl hydrolase 105 family.

It is found in the periplasm. Functionally, unsaturated beta-glucuronyl hydrolase involved in ulvan degradation. Ulvan is the main polysaccharide component of the Ulvales (green seaweed) cell wall. It is composed of disaccharide building blocks comprising 3-sulfated rhamnose (Rha3S) linked to D-glucuronic acid (GlcA), L-iduronic acid (IduA), or D-xylose (Xyl). Unsaturated 3S-rhamnoglycuronyl hydrolase works together with ulvan lyases to fully degrade the ulvan polymer, catalyzing specifically the cleavage of the unsaturated 4-deoxy-L-threo-hex-4-enopyranosiduronic acid (deltaUA) of deltaUA-Rha3S disaccharides and deltaUA-Rha3S-Xyl-Rha3S tetrasaccharides, the end products of the ulvan lyase reaction. Also hydrolases deltaUA-Rha3S-IduA-Rha3S and deltaUA-Rha3S-GlcA-Rha3S tetrasaccharidestetrasaccharides. Prefers tetrasaccharides over disaccharides and prefers an uronic residue at subsite +2. The protein is Unsaturated 3S-rhamnoglycuronyl hydrolase of Formosa agariphila (strain DSM 15362 / KCTC 12365 / LMG 23005 / KMM 3901 / M-2Alg 35-1).